The sequence spans 95 residues: Large ribosomal subunit protein bL25 (95 aa).

Belongs to the bacterial ribosomal protein bL25 family. In terms of assembly, part of the 50S ribosomal subunit; part of the 5S rRNA/L5/L18/L25 subcomplex. Contacts the 5S rRNA. Binds to the 5S rRNA independently of L5 and L18.

This is one of the proteins that binds to the 5S RNA in the ribosome where it forms part of the central protuberance. The chain is Large ribosomal subunit protein bL25 from Shewanella loihica (strain ATCC BAA-1088 / PV-4).